The primary structure comprises 115 residues: SPbeta prophage-derived uncharacterized protein YoqS (115 aa).

The chain is SPbeta prophage-derived uncharacterized protein YoqS (yoqS) from Bacillus subtilis (strain 168).